A 778-amino-acid polypeptide reads, in one-letter code: uncharacterized protein (778 aa).

Residues 1–92 (MSFVIAVPEA…GARSYVVAEA (92 aa)) enclose the PE domain. 3 disordered regions span residues 125 to 163 (ADGT…AGLI), 372 to 510 (TGLA…GDAF), and 718 to 778 (QGGL…GADG). 3 stretches are compositionally biased toward gly residues: residues 402–429 (NQTG…GGLG), 436–510 (DGTG…GDAF), and 718–763 (QGGL…GSSG).

It belongs to the mycobacterial PE family. PGRS subfamily.

This is an uncharacterized protein from Mycobacterium bovis (strain ATCC BAA-935 / AF2122/97).